Reading from the N-terminus, the 157-residue chain is 6,7-dimethyl-8-ribityllumazine synthase (157 aa).

Residues F26, 60–62, and 86–88 contribute to the 5-amino-6-(D-ribitylamino)uracil site; these read ALE and AVI. Residue 91–92 participates in (2S)-2-hydroxy-3-oxobutyl phosphate binding; that stretch reads ET. The Proton donor role is filled by H94. N119 contributes to the 5-amino-6-(D-ribitylamino)uracil binding site. R133 serves as a coordination point for (2S)-2-hydroxy-3-oxobutyl phosphate.

Belongs to the DMRL synthase family.

It carries out the reaction (2S)-2-hydroxy-3-oxobutyl phosphate + 5-amino-6-(D-ribitylamino)uracil = 6,7-dimethyl-8-(1-D-ribityl)lumazine + phosphate + 2 H2O + H(+). It participates in cofactor biosynthesis; riboflavin biosynthesis; riboflavin from 2-hydroxy-3-oxobutyl phosphate and 5-amino-6-(D-ribitylamino)uracil: step 1/2. Catalyzes the formation of 6,7-dimethyl-8-ribityllumazine by condensation of 5-amino-6-(D-ribitylamino)uracil with 3,4-dihydroxy-2-butanone 4-phosphate. This is the penultimate step in the biosynthesis of riboflavin. The protein is 6,7-dimethyl-8-ribityllumazine synthase of Laribacter hongkongensis (strain HLHK9).